Here is a 150-residue protein sequence, read N- to C-terminus: Transcriptional regulator MraZ (150 aa).

SpoVT-AbrB domains lie at 5-52 and 81-124; these read VTHL…PLPD and AHDL…DAEA.

This sequence belongs to the MraZ family. In terms of assembly, forms oligomers.

The protein localises to the cytoplasm. It localises to the nucleoid. The protein is Transcriptional regulator MraZ of Alkalilimnicola ehrlichii (strain ATCC BAA-1101 / DSM 17681 / MLHE-1).